The following is a 258-amino-acid chain: Phosphoadenosine 5'-phosphosulfate reductase (258 aa).

The Nucleophile; cysteine thiosulfonate intermediate role is filled by C244.

This sequence belongs to the PAPS reductase family. CysH subfamily.

It is found in the cytoplasm. It catalyses the reaction [thioredoxin]-disulfide + sulfite + adenosine 3',5'-bisphosphate + 2 H(+) = [thioredoxin]-dithiol + 3'-phosphoadenylyl sulfate. It participates in sulfur metabolism; hydrogen sulfide biosynthesis; sulfite from sulfate: step 3/3. Functionally, catalyzes the formation of sulfite from phosphoadenosine 5'-phosphosulfate (PAPS) using thioredoxin as an electron donor. The polypeptide is Phosphoadenosine 5'-phosphosulfate reductase (Vibrio atlanticus (strain LGP32) (Vibrio splendidus (strain Mel32))).